A 503-amino-acid polypeptide reads, in one-letter code: Arabinose import ATP-binding protein AraG (503 aa).

ABC transporter domains follow at residues 5 to 240 (LRFD…MVGR) and 253 to 497 (LGDV…LPQG). ATP is bound at residue 37 to 44 (GENGAGKS).

Belongs to the ABC transporter superfamily. Arabinose importer (TC 3.A.1.2.2) family. The complex is composed of two ATP-binding proteins (AraG), two transmembrane proteins (AraH) and a solute-binding protein (AraF).

It localises to the cell inner membrane. It carries out the reaction L-arabinose(out) + ATP + H2O = L-arabinose(in) + ADP + phosphate + H(+). Functionally, part of the ABC transporter complex AraFGH involved in arabinose import. Responsible for energy coupling to the transport system. The protein is Arabinose import ATP-binding protein AraG of Burkholderia pseudomallei (strain K96243).